The following is a 320-amino-acid chain: MLVVAEKEIAGLMTPEAAFEAIEAVFASMARRKAYNFPVVREAIGHEDALYGFKGGFDASALVLGLKAGGYWPNNQKHNLINHQSTVFLFDPDTGRVSAAVGGNLLTALRTAAASAVSIKYLAPKGAKVLGMIGAGHQSAFQMRAAANVHRFEKVIGWNPHPEMLSRLADTAAELGLPFEAVELDRLGAEADVIVSITSSFSPLLMNEHVKGPTHIAAMGTDTKGKQELDPALVARARIFTDEVAQSVSIGECQHAIAAGLIREDQVGELGAVVAGDDPGRGDAEVTIFDGTGVGLQDLAVAQAVVELAKHKGVAQEVEI.

K67 (proton donor/acceptor) is an active-site residue. Residues R110, 137–138, N159, S199, 219–222, K226, and G291 each bind NAD(+); these read HQ and MGTD.

It belongs to the ornithine cyclodeaminase/mu-crystallin family. BhcD subfamily.

The catalysed reaction is L-aspartate + NAD(+) = iminosuccinate + NADH + H(+). Imine reductase that catalyzes the NADH-dependent reduction of iminosuccinate to L-aspartate. Is essential for the growth of P.denitrificans in the presence of glycolate and glyoxylate since it functions in glyoxylate assimilation via the beta-hydroxyaspartate cycle (BHAC). Thereby BhcD regenerates the amino group donor for the first step of the BHAC. The sequence is that of Iminosuccinate reductase from Paracoccus denitrificans (strain Pd 1222).